Here is a 452-residue protein sequence, read N- to C-terminus: FAD transporter (452 aa).

12 consecutive transmembrane segments (helical) span residues 21-41 (LPNL…TFFI), 49-69 (LAAI…AIGV), 96-116 (ALLL…IFIE), 131-151 (LIHD…LLMV), 167-187 (MIMT…IFGI), 199-219 (AIAT…LLII), 248-270 (AALM…AHID), 283-303 (LESV…PFIA), 324-344 (FILV…QPLA), 357-377 (LSFY…VIIF), 392-412 (VINL…GSYI), and 417-437 (GLLL…YYLA).

This sequence belongs to the multi antimicrobial extrusion (MATE) (TC 2.A.66.1) family.

The protein localises to the cell inner membrane. Flavin adenine dinucleotide (FAD) transporter that facilitates export of flavin electron shuttles. The polypeptide is FAD transporter (Shewanella oneidensis (strain ATCC 700550 / JCM 31522 / CIP 106686 / LMG 19005 / NCIMB 14063 / MR-1)).